Here is a 285-residue protein sequence, read N- to C-terminus: Nucleotide-binding protein CD630_34000 (285 aa).

ATP is bound at residue 8 to 15 (GLSGSGKS). 59-62 (DIRG) contributes to the GTP binding site.

The protein belongs to the RapZ-like family.

In terms of biological role, displays ATPase and GTPase activities. This Clostridioides difficile (strain 630) (Peptoclostridium difficile) protein is Nucleotide-binding protein CD630_34000.